The chain runs to 71 residues: Translation initiation factor IF-1 (71 aa).

An S1-like domain is found at 1-71; the sequence is MSKDDLIQFT…LTKGRVIHRH (71 aa).

Belongs to the IF-1 family. Component of the 30S ribosomal translation pre-initiation complex which assembles on the 30S ribosome in the order IF-2 and IF-3, IF-1 and N-formylmethionyl-tRNA(fMet); mRNA recruitment can occur at any time during PIC assembly.

It is found in the cytoplasm. Functionally, one of the essential components for the initiation of protein synthesis. Stabilizes the binding of IF-2 and IF-3 on the 30S subunit to which N-formylmethionyl-tRNA(fMet) subsequently binds. Helps modulate mRNA selection, yielding the 30S pre-initiation complex (PIC). Upon addition of the 50S ribosomal subunit IF-1, IF-2 and IF-3 are released leaving the mature 70S translation initiation complex. The sequence is that of Translation initiation factor IF-1 from Rickettsia canadensis (strain McKiel).